A 338-amino-acid chain; its full sequence is Heat-inducible transcription repressor HrcA (338 aa).

This sequence belongs to the HrcA family.

Negative regulator of class I heat shock genes (grpE-dnaK-dnaJ and groELS operons). Prevents heat-shock induction of these operons. The polypeptide is Heat-inducible transcription repressor HrcA (Thermotoga sp. (strain RQ2)).